The sequence spans 97 residues: Glutamyl-tRNA(Gln) amidotransferase subunit C (97 aa).

Belongs to the GatC family. In terms of assembly, heterotrimer of A, B and C subunits.

The enzyme catalyses L-glutamyl-tRNA(Gln) + L-glutamine + ATP + H2O = L-glutaminyl-tRNA(Gln) + L-glutamate + ADP + phosphate + H(+). It catalyses the reaction L-aspartyl-tRNA(Asn) + L-glutamine + ATP + H2O = L-asparaginyl-tRNA(Asn) + L-glutamate + ADP + phosphate + 2 H(+). Functionally, allows the formation of correctly charged Asn-tRNA(Asn) or Gln-tRNA(Gln) through the transamidation of misacylated Asp-tRNA(Asn) or Glu-tRNA(Gln) in organisms which lack either or both of asparaginyl-tRNA or glutaminyl-tRNA synthetases. The reaction takes place in the presence of glutamine and ATP through an activated phospho-Asp-tRNA(Asn) or phospho-Glu-tRNA(Gln). The sequence is that of Glutamyl-tRNA(Gln) amidotransferase subunit C from Saccharolobus solfataricus (strain ATCC 35092 / DSM 1617 / JCM 11322 / P2) (Sulfolobus solfataricus).